Consider the following 641-residue polypeptide: SUMO-activating enzyme subunit 2-B (641 aa).

Residues 24–29 (GAGGIG), D48, 56–59 (NLNR), K72, 95–96 (SI), and 117–122 (DNNAAR) contribute to the ATP site. Residues C158 and C161 each coordinate Zn(2+). Residue C173 is the Glycyl thioester intermediate of the active site. Residues C439 and C442 each coordinate Zn(2+). The disordered stretch occupies residues 546 to 641 (GDVPEKGPQK…EEDDDIIALD (96 aa)). Residues 548–561 (VPEKGPQKPPEESV) show a composition bias toward basic and acidic residues. Over residues 562–579 (KNITNGSDDGAQPSTSKA) the composition is skewed to polar residues. Acidic residues-rich tracts occupy residues 582–594 (QDDV…DEES) and 630–641 (PVEEDDDIIALD).

Belongs to the ubiquitin-activating E1 family. In terms of assembly, heterodimer of sae1 and uba2/sae2. The heterodimer corresponds to the two domains that are encoded on a single polypeptide chain in ubiquitin-activating enzyme E1. Interacts with ube2i.

It localises to the nucleus. It participates in protein modification; protein sumoylation. In terms of biological role, the heterodimer acts as an E1 ligase for sumo1, sumo2, and sumo3. It mediates ATP-dependent activation of sumo proteins followed by formation of a thioester bond between a sumo protein and a conserved active site cysteine residue on uba2/sae2. The sequence is that of SUMO-activating enzyme subunit 2-B (uba2-b) from Xenopus laevis (African clawed frog).